The primary structure comprises 274 residues: NAD(P)H dehydrogenase [quinone] 1 (274 aa).

An N-acetylalanine modification is found at Ala2. FAD is bound by residues His12, 18–19 (FN), and Gln67. Position 82 is a phosphoserine (Ser82). An FAD-binding site is contributed by 104-107 (LYWF). Residue 126 to 128 (AYT) coordinates substrate. FAD is bound by residues 148 to 151 (TTGG), Tyr156, and Arg201. The tract at residues 225–274 (PSSLFDLNFQAGFLLKKEVQEEQKKNKFGLSVGHHLGKSIPADNQIKARK) is important for apoenzyme conformational stability. Lys251 participates in a covalent cross-link: Glycyl lysine isopeptide (Lys-Gly) (interchain with G-Cter in SUMO2).

It belongs to the NAD(P)H dehydrogenase (quinone) family. Homodimer. Interacts with PDLIM4 isoform 2; this interaction stabilizes PDLIM4 isoform 2 in response to oxidative stress and protects it from ubiquitin-independent degradation by the core 20S proteasome. Interacts with TP73 (via SAM domain); this interaction is NADH-dependent, stabilizes TP73 in response to oxidative stress and protects it from ubiquitin-independent degradation by the 20S proteasome. Interacts with TP53; this interaction is NADH-dependent, stabilizes TP53 in response to oxidative stress and protects it from ubiquitin-independent degradation by the 20S proteasome. Requires FAD as cofactor.

It is found in the cytoplasm. The protein localises to the cytosol. The catalysed reaction is a quinone + NADH + H(+) = a quinol + NAD(+). It carries out the reaction a quinone + NADPH + H(+) = a quinol + NADP(+). The enzyme catalyses ubiquinone-10 + NADH + H(+) = ubiquinol-10 + NAD(+). It catalyses the reaction menadione + NADH + H(+) = menadiol + NAD(+). Functionally, flavin-containing quinone reductase that catalyzes two-electron reduction of quinones to hydroquinones using either NADH or NADPH as electron donors. In a ping-pong kinetic mechanism, the electrons are sequentially transferred from NAD(P)H to flavin cofactor and then from reduced flavin to the quinone, bypassing the formation of semiquinone and reactive oxygen species. Regulates cellular redox state primarily through quinone detoxification. Reduces components of plasma membrane redox system such as coenzyme Q and vitamin quinones, producing antioxidant hydroquinone forms. In the process may function as superoxide scavenger to prevent hydroquinone oxidation and facilitate excretion. Alternatively, can activate quinones and their derivatives by generating redox reactive hydroquinones with DNA cross-linking antitumor potential. Acts as a gatekeeper of the core 20S proteasome known to degrade proteins with unstructured regions. Upon oxidative stress, interacts with tumor suppressors TP53 and TP73 in a NADH-dependent way and inhibits their ubiquitin-independent degradation by the 20S proteasome. This chain is NAD(P)H dehydrogenase [quinone] 1 (Nqo1), found in Rattus norvegicus (Rat).